A 314-amino-acid polypeptide reads, in one-letter code: Ribosomal protein uL3 glutamine methyltransferase (314 aa).

The protein belongs to the protein N5-glutamine methyltransferase family. PrmB subfamily.

The catalysed reaction is L-glutaminyl-[ribosomal protein uL3] + S-adenosyl-L-methionine = N(5)-methyl-L-glutaminyl-[ribosomal protein uL3] + S-adenosyl-L-homocysteine + H(+). In terms of biological role, methylates large ribosomal subunit protein uL3 on a specific glutamine residue. The polypeptide is Ribosomal protein uL3 glutamine methyltransferase (Haemophilus influenzae (strain ATCC 51907 / DSM 11121 / KW20 / Rd)).